Reading from the N-terminus, the 633-residue chain is MNSVLNSGRTTICDAYNVAAHDPFSFQHKSLDTVQKEWTEWKKNNHSLYLDPIVGTVASFLLKKVGSLVGKRILSELRNLIFPSGSTNLMQDILRETEKFLNQRLNTDTLARVNAELTGLQANVEEFNRQVDNFLNPNRNAVPLSITSSVNTMQQLFLNRLPQFQMQGYQLLLLPLFAQAANLHLSFIRDVILNADEWGISAATLRTYRDYLKNYTRDYSNYCINTYQSAFKGLNTRLHDMLEFRTYMFLNVFEYVSIWSLFKYQSLLVSSGANLYASGSGPQQTQSFTSQDWPFLYSLFQVNSNYVLNGFSGARLSNTFPNIVGLPGSTTTHALLAARVNYSGGISSGDIGASPFNQNFNCSTFLPPLLTPFVRSWLDSGSDREGVATVTNWQTESFETTLGLRSGAFTARGNSNYFPDYFIRNISGVPLVVRNEDLRRPLHYNEIRNIASPSGTPGGARAYMVSVHNRKNNIHAVHENGSMIHLAPNDYTGFTISPIHATQVNNQTRTFISEKFGNQGDSLRFEQNNTTARYTLRGNGNSYNLYLRVSSIGNSTIRVTINGRVYTATNVNTTTNNDGVNDNGARFSDINIGNVVASSNSDVPLDINVTLNSGTQFDLMNIMLVPTNISPLY.

The protein belongs to the delta endotoxin family.

In terms of biological role, promotes colloidosmotic lysis by binding to the midgut epithelial cells of lepidopteran (Manduca sexta) larvae. The polypeptide is Pesticidal crystal protein Cry2Ab (cry2Ab) (Bacillus thuringiensis subsp. kurstaki).